The following is a 429-amino-acid chain: Xyloglucan O-acetyltransferase 1 (429 aa).

Topologically, residues 1 to 20 are cytoplasmic; that stretch reads MGSPFKDHHHHHHPFSLAKK. Residues 21 to 41 traverse the membrane as a helical; Signal-anchor for type II membrane protein segment; the sequence is LIPWTFYAMIPLVLFRLYFYP. At 42–429 the chain is on the lumenal side; the sequence is YPLHNITTPI…KWDYESRREE (388 aa). Residues Asn46 and Asn89 are each glycosylated (N-linked (GlcNAc...) asparagine). Cystine bridges form between Cys72–Cys122, Cys93–Cys158, Cys102–Cys402, and Cys317–Cys398. Residues 145–147 carry the GDS motif motif; it reads GDS. The active-site Nucleophile is Ser147. Asn189, Asn263, and Asn351 each carry an N-linked (GlcNAc...) asparagine glycan. Asp397 functions as the Proton donor in the catalytic mechanism. Residues 397 to 400 carry the DXXH motif motif; it reads DCVH. His400 acts as the Proton acceptor in catalysis.

It belongs to the PC-esterase family. TBL subfamily.

It localises to the golgi apparatus membrane. In terms of biological role, xyloglucan acetyltransferase that catalyzes the acetylation of fucosylated Gal residues on xyloglucan side chains. Predominantly catalyze 6-O-monoacetylation of Gal residues in the Fuc-Gal-Xyl trisaccharide side chains of xyloglucan oligomers. The polypeptide is Xyloglucan O-acetyltransferase 1 (Populus trichocarpa (Western balsam poplar)).